We begin with the raw amino-acid sequence, 294 residues long: Protein ATC1/LIC4 (294 aa).

The tract at residues 114-178 is disordered; that stretch reads YTGKASLDKS…SSSLASSDAN (65 aa). Residues 130-145 are compositionally biased toward basic and acidic residues; sequence HKPDKEQKNYKIDKPT. Residues 153–175 show a composition bias toward low complexity; sequence LKTTNEPMLSPASLSPSSSLASS.

It localises to the cytoplasm. Its subcellular location is the nucleus. Functionally, involved in cation homeostasis and in the regulation of the cation stress signaling cascades. Also involved in bipolar budding. The chain is Protein ATC1/LIC4 (ATC1) from Saccharomyces cerevisiae (strain ATCC 204508 / S288c) (Baker's yeast).